Reading from the N-terminus, the 159-residue chain is Transcriptional repressor NrdR (159 aa).

The segment covering 1–11 has biased composition (polar residues); the sequence is MQCPTCQNTDS. The disordered stretch occupies residues 1–21; sequence MQCPTCQNTDSRVLESRSADS. The segment at 3–34 is a zinc-finger region; that stretch reads CPTCQNTDSRVLESRSADSGKSVRRRRECLNC. In terms of domain architecture, ATP-cone spans 49 to 139; it reads VSVMKKDGSR…VYRKFNGVKD (91 aa).

The protein belongs to the NrdR family. Zn(2+) serves as cofactor.

Negatively regulates transcription of bacterial ribonucleotide reductase nrd genes and operons by binding to NrdR-boxes. The polypeptide is Transcriptional repressor NrdR (Prochlorococcus marinus (strain MIT 9215)).